Here is a 101-residue protein sequence, read N- to C-terminus: Large ribosomal subunit protein eL21 (101 aa).

Basic residues predominate over residues 1–18 (MVKHSRGYRTRSRSLLRK). Positions 1 to 23 (MVKHSRGYRTRSRSLLRKSPRER) are disordered.

The protein belongs to the eukaryotic ribosomal protein eL21 family.

This chain is Large ribosomal subunit protein eL21, found in Saccharolobus islandicus (strain Y.G.57.14 / Yellowstone #1) (Sulfolobus islandicus).